We begin with the raw amino-acid sequence, 999 residues long: Lysosomal alpha-mannosidase (999 aa).

A disordered region spans residues 1–25 (MVGDARPSGVRAGGCRGAVGSRTSS). The first 50 residues, 1–50 (MVGDARPSGVRAGGCRGAVGSRTSSRALRPPLPPLSSLFVLFLAAPCAWA), serve as a signal peptide directing secretion. Positions 73 and 75 each coordinate Zn(2+). Asn-134 is a glycosylation site (N-linked (GlcNAc...) asparagine). Asp-197 is a binding site for Zn(2+). Asp-197 serves as the catalytic Nucleophile. A disulfide bond links Cys-269 and Cys-274. N-linked (GlcNAc...) asparagine glycosylation occurs at Asn-369. His-448 provides a ligand contact to Zn(2+). A disulfide bridge connects residues Cys-495 and Cys-503. Asn-499 carries N-linked (GlcNAc...) asparagine glycosylation. A propeptide spanning residues 591–621 (SRDLVIQNEYLRARFDPNTGLLMELENLEQN) is cleaved from the precursor. 5 N-linked (GlcNAc...) asparagine glycosylation sites follow: Asn-634, Asn-640, Asn-681, Asn-755, and Asn-919.

Belongs to the glycosyl hydrolase 38 family. As to quaternary structure, homodimer. Zn(2+) is required as a cofactor. Post-translationally, processed into 5 peptides of 35/38 kDa (A), 11/13 kDa (B) and 22 kDa (C), 38 kDa (D) and 13/15 kDa (E). The A, B and C peptides are disulfide-linked into a 67 kDa complex. In terms of processing, heavily glycosylated. Some sugar chains are of the high-mannose type.

The protein resides in the lysosome. It carries out the reaction Hydrolysis of terminal, non-reducing alpha-D-mannose residues in alpha-D-mannosides.. Functionally, necessary for the catabolism of N-linked carbohydrates released during glycoprotein turnover. The protein is Lysosomal alpha-mannosidase (MAN2B1) of Bos taurus (Bovine).